A 411-amino-acid polypeptide reads, in one-letter code: MTTEIRVPTLGESVTEATVGKWFKKLGEAVAIDEPLVELETDKVTVEVPSPVAGKLFEIIAKEGDTVEVNALLGAVEAGAASVAKSPSSSETSVSAAPSELEQSSSSNTMPPAPSAAKLMAENNIAKSDILGSGKRGQILKEDVLNVLAQGVKTSPPAVSASSSTPVSVSSSAVAPVQEMREERVRMTKLRQTIARRLKDAQNTAAMLTTFNEVDMSAVMGLRKRYKDLFEKKHGVKLGFMGFFTKAVCHALKELPAVNAEIDGTDIIYKNYVNAGIAVGTDKGLVVPVVRDADQMSLAEIEKEIGRLGRLARDGKLAVSDMQGGTFTITNGGVYGSLMSTPILNAPQSGILGMHAIKERAMVVDGQIAIRPMMYLALSYDHRIVDGQEAVTFLVRVKESLEDPERLVLDL.

The Lipoyl-binding domain maps to 2 to 77 (TTEIRVPTLG…EVNALLGAVE (76 aa)). Position 43 is an N6-lipoyllysine (Lys-43). Over residues 82-100 (SVAKSPSSSETSVSAAPSE) the composition is skewed to low complexity. A disordered region spans residues 82 to 115 (SVAKSPSSSETSVSAAPSELEQSSSSNTMPPAPS). The span at 101 to 110 (LEQSSSSNTM) shows a compositional bias: polar residues. A Peripheral subunit-binding (PSBD) domain is found at 111 to 148 (PPAPSAAKLMAENNIAKSDILGSGKRGQILKEDVLNVL). Active-site residues include His-382 and Asp-386.

It belongs to the 2-oxoacid dehydrogenase family. As to quaternary structure, forms a 24-polypeptide structural core with octahedral symmetry. Part of the 2-oxoglutarate dehydrogenase (OGDH) complex composed of E1 (2-oxoglutarate dehydrogenase), E2 (dihydrolipoamide succinyltransferase) and E3 (dihydrolipoamide dehydrogenase); the complex contains multiple copies of the three enzymatic components (E1, E2 and E3). The cofactor is (R)-lipoate.

The enzyme catalyses N(6)-[(R)-dihydrolipoyl]-L-lysyl-[protein] + succinyl-CoA = N(6)-[(R)-S(8)-succinyldihydrolipoyl]-L-lysyl-[protein] + CoA. The protein operates within amino-acid degradation; L-lysine degradation via saccharopine pathway; glutaryl-CoA from L-lysine: step 6/6. E2 component of the 2-oxoglutarate dehydrogenase (OGDH) complex which catalyzes the second step in the conversion of 2-oxoglutarate to succinyl-CoA and CO(2). The chain is Dihydrolipoyllysine-residue succinyltransferase component of 2-oxoglutarate dehydrogenase complex (sucB) from Bartonella vinsonii subsp. berkhoffii.